The primary structure comprises 329 residues: DNA-directed RNA polymerase subunit alpha (329 aa).

Residues 1 to 235 (MQGSVTEFLK…EQLDAFVDLR (235 aa)) are alpha N-terminal domain (alpha-NTD). Residues 249–329 (FDPILLRPVD…NWPPASIAED (81 aa)) are alpha C-terminal domain (alpha-CTD).

Belongs to the RNA polymerase alpha chain family. Homodimer. The RNAP catalytic core consists of 2 alpha, 1 beta, 1 beta' and 1 omega subunit. When a sigma factor is associated with the core the holoenzyme is formed, which can initiate transcription.

It carries out the reaction RNA(n) + a ribonucleoside 5'-triphosphate = RNA(n+1) + diphosphate. Its function is as follows. DNA-dependent RNA polymerase catalyzes the transcription of DNA into RNA using the four ribonucleoside triphosphates as substrates. This is DNA-directed RNA polymerase subunit alpha from Histophilus somni (strain 129Pt) (Haemophilus somnus).